Consider the following 231-residue polypeptide: Small ribosomal subunit protein uS3 (231 aa).

The KH type-2 domain maps to 39 to 107; sequence IRKFLKAKLY…DVTINIKEER (69 aa).

The protein belongs to the universal ribosomal protein uS3 family. Part of the 30S ribosomal subunit. Forms a tight complex with proteins S10 and S14.

Binds the lower part of the 30S subunit head. Binds mRNA in the 70S ribosome, positioning it for translation. This chain is Small ribosomal subunit protein uS3, found in Campylobacter hominis (strain ATCC BAA-381 / DSM 21671 / CCUG 45161 / LMG 19568 / NCTC 13146 / CH001A).